The following is a 485-amino-acid chain: Adenosylhomocysteinase (485 aa).

Substrate contacts are provided by threonine 64, aspartate 139, and glutamate 205. 206–208 (TTT) is an NAD(+) binding site. Substrate is bound by residues lysine 235 and aspartate 239. Residues asparagine 240, 269–274 (GYGDVG), glutamate 292, asparagine 327, 348–350 (IGH), and asparagine 397 each bind NAD(+).

The protein belongs to the adenosylhomocysteinase family. It depends on NAD(+) as a cofactor.

The enzyme catalyses S-adenosyl-L-homocysteine + H2O = L-homocysteine + adenosine. It functions in the pathway amino-acid biosynthesis; L-homocysteine biosynthesis; L-homocysteine from S-adenosyl-L-homocysteine: step 1/1. Its function is as follows. Adenosylhomocysteine is a competitive inhibitor of S-adenosyl-L-methionine-dependent methyl transferase reactions; therefore adenosylhomocysteinase may play a key role in the control of methylations via regulation of the intracellular concentration of adenosylhomocysteine. This is Adenosylhomocysteinase (SAHH) from Medicago sativa (Alfalfa).